The chain runs to 165 residues: MDVLRAREQLRRRYLFPQDAEVPLEHEGYPRPETSTAVEKKEKPLPRLNIHSGFWILASIVVTYYVDFFQTVKENFHTSSWFLFGSALLLVSVSIAFYCIVYLEWYRGIEDYDIKYPALIPITTATFIVAGICFNVALWHVWSFFTPVLLFTQFMGVVMLTSLLG.

4 consecutive transmembrane segments (helical) span residues 49–69 (NIHSGFWILASIVVTYYVDFF), 81–101 (WFLFGSALLLVSVSIAFYCIV), 119–139 (LIPITTATFIVAGICFNVALW), and 144–164 (FFTPVLLFTQFMGVVMLTSLL).

It localises to the membrane. The chain is Transmembrane protein 128 (TMEM128) from Bos taurus (Bovine).